We begin with the raw amino-acid sequence, 91 residues long: Acylphosphatase (91 aa).

One can recognise an Acylphosphatase-like domain in the interval 5–91 (WKKWNVRGVV…QEYKDFHVEF (87 aa)). Catalysis depends on residues Arg-20 and Asn-38.

The protein belongs to the acylphosphatase family.

It carries out the reaction an acyl phosphate + H2O = a carboxylate + phosphate + H(+). The polypeptide is Acylphosphatase (acyP) (Fervidobacterium nodosum (strain ATCC 35602 / DSM 5306 / Rt17-B1)).